A 150-amino-acid chain; its full sequence is uncharacterized protein (150 aa).

Transmembrane regions (helical) follow at residues isoleucine 32–leucine 52, phenylalanine 64–glycine 84, isoleucine 94–phenylalanine 114, and leucine 123–methionine 143.

The protein localises to the cell membrane. This is an uncharacterized protein from Bacillus subtilis (strain 168).